We begin with the raw amino-acid sequence, 499 residues long: Serine carboxypeptidase-like 34 (499 aa).

Positions 1–25 are cleaved as a signal peptide; sequence MGSHSVEFSVLVLFLVSFLLGSTSA. Residues asparagine 73, asparagine 124, and asparagine 158 are each glycosylated (N-linked (GlcNAc...) asparagine). 3 cysteine pairs are disulfide-bonded: cysteine 106–cysteine 383, cysteine 269–cysteine 280, and cysteine 304–cysteine 351. The active site involves serine 200. N-linked (GlcNAc...) asparagine glycosylation is found at asparagine 310, asparagine 372, and asparagine 375. Residues aspartate 419 and histidine 471 contribute to the active site.

Belongs to the peptidase S10 family. Ubiquitous.

It is found in the secreted. Its function is as follows. Probable carboxypeptidase. The polypeptide is Serine carboxypeptidase-like 34 (SCPL34) (Arabidopsis thaliana (Mouse-ear cress)).